The chain runs to 160 residues: SKP1-like protein 1A (160 aa).

The interval 102 to 160 (ILAANYLNIKNLLDLTCQTVADMIKGKTPEEIRTTFNIKNDFTPEEEEEVRRENQWAFE) is interaction with the F-box domain of F-box proteins.

The protein belongs to the SKP1 family. In terms of assembly, part of a SCF E3 ubiquitin ligase complex composed of SKP1, CUL1, RBX1 (RBX1A or RBX1B) and F-box proteins. Interacts with SKIP1, SKIP2, SKIP3, SKIP4, SKIP6, FIB1/SKIP7, SKIP8, PP2A11/SKIP10, SKIP11, PP2B11/SKIP12, PP2A14/SKIP13, SKIP14, SKIP15, SKIP16, SKIP19/FBL20, SKIP20, PP2B1/SKIP21, SKIP22, SKIP23, SKIP24, SKIP25, TULP10/SKIP26, SKIP27, SKIP28/MEE11, AFR/SKIP29, SKIP30, SKIP31, SKIP32/FBP7, SKIP33, SKIP35, ADO1/ZTL, ADO2/LKP2, ADO3/FKF1, AFR, COI1, DOR, EBF1, EBF2, EID1, ORE9, PP2A13/SKIP9, TIR1, UFO, SKP2A, CPR1/CPR30, FBL17, NUP58, At1g55000, At1g67340, At1g78100, At3g04660, At3g61590, At4g38940 and At5g49610. The SKP1A subunit of the SCF E3 ubiquitin ligase complex can interact directly with KIN10, KIN11 and the proteasome subunit PAD1. This interaction can be disrupted by PRL1. In case of polerovirus infection, part of a SCF P0 complex composed of the viral silencing suppressor P0, SKP1 and CUL1. Interacts with turnip yellows virus P0. Interacts with VBF and Agrobacterium virF. Binds to KIB1. Accumulates only in meristematic cells. Expressed in inflorescence, shoot and root apical meristems, as well as in developing organs such as gametocytes and seeds. Also detected in cortical layer and epidermis of roots, leaves, pith and vascular bundle of young stem, young floral buds and organ primordia, pollen and through the valve of siliques. Not detectable in mature root tissues.

It is found in the nucleus. The protein localises to the cytoplasm. Its subcellular location is the cytoskeleton. It localises to the spindle. The protein resides in the phragmoplast. It participates in protein modification; protein ubiquitination. Functionally, involved in ubiquitination and subsequent proteasomal degradation of target proteins. Together with CUL1, RBX1 and a F-box protein, it forms a SCF E3 ubiquitin ligase complex. The functional specificity of this complex depends on the type of F-box protein. In the SCF complex, it serves as an adapter that links the F-box protein to CUL1. SCF(UFO) is required for vegetative and floral organ development as well as for male gametogenesis. SCF(TIR1) is involved in auxin signaling pathway. SCF(COI1) regulates responses to jasmonates. SCF(EID1) and SCF(AFR) are implicated in phytochrome A light signaling. SCF(ADO1), SCF(ADO2), SCF(ADO3) are related to the circadian clock. SCF(ORE9) seems to be involved in senescence. SCF(EBF1/EBF2) may regulate ethylene signaling. Plays a role during embryogenesis and early postembryonic development, especially during cell elongation and division. Contributes to the correct chromosome segregation during tetrad formation. The protein is SKP1-like protein 1A of Arabidopsis thaliana (Mouse-ear cress).